The chain runs to 363 residues: Chorismate synthase (363 aa).

Arginine 48 and arginine 54 together coordinate NADP(+). FMN is bound by residues 131-133, 244-245, glycine 288, 303-307, and arginine 329; these read RSS, NA, and KPTSS.

This sequence belongs to the chorismate synthase family. In terms of assembly, homotetramer. The cofactor is FMNH2.

The catalysed reaction is 5-O-(1-carboxyvinyl)-3-phosphoshikimate = chorismate + phosphate. The protein operates within metabolic intermediate biosynthesis; chorismate biosynthesis; chorismate from D-erythrose 4-phosphate and phosphoenolpyruvate: step 7/7. Catalyzes the anti-1,4-elimination of the C-3 phosphate and the C-6 proR hydrogen from 5-enolpyruvylshikimate-3-phosphate (EPSP) to yield chorismate, which is the branch point compound that serves as the starting substrate for the three terminal pathways of aromatic amino acid biosynthesis. This reaction introduces a second double bond into the aromatic ring system. In Maricaulis maris (strain MCS10) (Caulobacter maris), this protein is Chorismate synthase.